A 194-amino-acid polypeptide reads, in one-letter code: uncharacterized protein (194 aa).

This sequence belongs to the mimivirus L114/R131 family.

This is an uncharacterized protein from Acanthamoeba polyphaga mimivirus (APMV).